The following is a 428-amino-acid chain: MSNALPKGVFDIFPYVTSPKNLWRNSSLWKRVEHAAHRICNLYGFDEIRTPVFEKTETFLRVGEHSDIVKKEVYTFLDKKGRSLTLRPEGTAAVVRALLDHSADMRKDNKFYYILPMFRYERQQSGRYRQHHQFGLEAIGVRHPLRDAEVLSLLWDFYAAVGLQHMQIHVNFLGGQKTRARYDEALREFFRKDLDRLSPLSQERYHANLLRILDSKEPEDQEFIEKAPSILDYIDDRDLSYFDAVLAQLKALGIPFAINPRLVRGLDYYTDLVFEAVTVVGERSYALGGGGRYDELVAQSGGPSMPAFGFGVGLERVIQTLLEQGNSLSTSTRRLRLIPMDEQADAFCFSWANRLRNLGIATEVDWSHKKPKLSLKDAADQQVSFVCLLGEQELATKQFIVKDMSLHQSFSGAQQDVEQRLVYEVQNA.

It belongs to the class-II aminoacyl-tRNA synthetase family. In terms of assembly, homodimer.

The protein localises to the cytoplasm. The catalysed reaction is tRNA(His) + L-histidine + ATP = L-histidyl-tRNA(His) + AMP + diphosphate + H(+). In Chlamydia trachomatis serovar L2 (strain ATCC VR-902B / DSM 19102 / 434/Bu), this protein is Histidine--tRNA ligase.